The following is a 118-amino-acid chain: Small ribosomal subunit protein uS13 (118 aa).

The interval 94–118 (NLPVRGQNTKNNARTRKGPIRSIKR) is disordered. A compositionally biased stretch (basic residues) spans 106–118 (ARTRKGPIRSIKR).

This sequence belongs to the universal ribosomal protein uS13 family. As to quaternary structure, part of the 30S ribosomal subunit. Forms a loose heterodimer with protein S19. Forms two bridges to the 50S subunit in the 70S ribosome.

Functionally, located at the top of the head of the 30S subunit, it contacts several helices of the 16S rRNA. In the 70S ribosome it contacts the 23S rRNA (bridge B1a) and protein L5 of the 50S subunit (bridge B1b), connecting the 2 subunits; these bridges are implicated in subunit movement. Contacts the tRNAs in the A and P-sites. This chain is Small ribosomal subunit protein uS13, found in Psychrobacter sp. (strain PRwf-1).